The following is a 133-amino-acid chain: ATP synthase epsilon chain, chloroplastic (133 aa).

It belongs to the ATPase epsilon chain family. In terms of assembly, F-type ATPases have 2 components, CF(1) - the catalytic core - and CF(0) - the membrane proton channel. CF(1) has five subunits: alpha(3), beta(3), gamma(1), delta(1), epsilon(1). CF(0) has three main subunits: a, b and c.

The protein localises to the plastid. Its subcellular location is the chloroplast thylakoid membrane. Its function is as follows. Produces ATP from ADP in the presence of a proton gradient across the membrane. This is ATP synthase epsilon chain, chloroplastic from Cyanidium caldarium (Red alga).